We begin with the raw amino-acid sequence, 402 residues long: Zinc finger CCHC domain-containing protein 12 (402 aa).

Positions 1 to 20 (MASILSRLGSSRGQNSPLPP) are disordered. A CCHC-type zinc finger spans residues 346-363 (IHCSHCGEEGHSKETCDN). The segment at 383–402 (HAEERARGAPGEPIGLSEPQ) is disordered.

The protein belongs to the ZCCHC12 family. In terms of assembly, interacts with SMAD1 and CREB-binding protein (CBP). Forms a protein-DNA complex through its association with SMAD1. In embryonic brains expression is restricted to the ventral region of the forebrain, including the septum, amygdala, caudal putamen, and in the basal-forebrain cholinergic neurons. In adults, expressed in the brain, and at low levels in the testis.

Its function is as follows. Transcriptional coactivator in the bone morphogenetic protein (BMP)-signaling pathway. It positively modulates BMP signaling by interacting with SMAD1 and associating with CBP in the transcription complex. It contributes to the BMP-induced enhancement of cholinergic-neuron-specific gene expression. The chain is Zinc finger CCHC domain-containing protein 12 (Zcchc12) from Mus musculus (Mouse).